The primary structure comprises 140 residues: ATP synthase epsilon chain (140 aa).

Belongs to the ATPase epsilon chain family. As to quaternary structure, F-type ATPases have 2 components, CF(1) - the catalytic core - and CF(0) - the membrane proton channel. CF(1) has five subunits: alpha(3), beta(3), gamma(1), delta(1), epsilon(1). CF(0) has three main subunits: a, b and c.

It localises to the cell inner membrane. Its function is as follows. Produces ATP from ADP in the presence of a proton gradient across the membrane. This Stenotrophomonas maltophilia (strain R551-3) protein is ATP synthase epsilon chain.